The sequence spans 266 residues: Tryptophan synthase alpha chain (266 aa).

Catalysis depends on proton acceptor residues glutamate 46 and aspartate 57.

It belongs to the TrpA family. As to quaternary structure, tetramer of two alpha and two beta chains.

The enzyme catalyses (1S,2R)-1-C-(indol-3-yl)glycerol 3-phosphate + L-serine = D-glyceraldehyde 3-phosphate + L-tryptophan + H2O. It functions in the pathway amino-acid biosynthesis; L-tryptophan biosynthesis; L-tryptophan from chorismate: step 5/5. Its function is as follows. The alpha subunit is responsible for the aldol cleavage of indoleglycerol phosphate to indole and glyceraldehyde 3-phosphate. The protein is Tryptophan synthase alpha chain of Lacticaseibacillus casei (Lactobacillus casei).